The primary structure comprises 145 residues: D-aminoacyl-tRNA deacylase (145 aa).

The short motif at 137-138 (GP) is the Gly-cisPro motif, important for rejection of L-amino acids element.

The protein belongs to the DTD family. Homodimer.

It is found in the cytoplasm. The enzyme catalyses glycyl-tRNA(Ala) + H2O = tRNA(Ala) + glycine + H(+). It carries out the reaction a D-aminoacyl-tRNA + H2O = a tRNA + a D-alpha-amino acid + H(+). Functionally, an aminoacyl-tRNA editing enzyme that deacylates mischarged D-aminoacyl-tRNAs. Also deacylates mischarged glycyl-tRNA(Ala), protecting cells against glycine mischarging by AlaRS. Acts via tRNA-based rather than protein-based catalysis; rejects L-amino acids rather than detecting D-amino acids in the active site. By recycling D-aminoacyl-tRNA to D-amino acids and free tRNA molecules, this enzyme counteracts the toxicity associated with the formation of D-aminoacyl-tRNA entities in vivo and helps enforce protein L-homochirality. The chain is D-aminoacyl-tRNA deacylase from Escherichia coli O7:K1 (strain IAI39 / ExPEC).